Here is a 133-residue protein sequence, read N- to C-terminus: DNA-directed RNA polymerase subunit omega (133 aa).

Belongs to the RNA polymerase subunit omega family. The RNAP catalytic core consists of 2 alpha, 1 beta, 1 beta' and 1 omega subunit. When a sigma factor is associated with the core the holoenzyme is formed, which can initiate transcription.

It carries out the reaction RNA(n) + a ribonucleoside 5'-triphosphate = RNA(n+1) + diphosphate. In terms of biological role, promotes RNA polymerase assembly. Latches the N- and C-terminal regions of the beta' subunit thereby facilitating its interaction with the beta and alpha subunits. This chain is DNA-directed RNA polymerase subunit omega, found in Brucella abortus (strain S19).